The chain runs to 226 residues: uncharacterized protein (226 aa).

The RNase H type-1 domain occupies 71 to 207 (EPDDITVYFD…ADGLAKKILS (137 aa)).

This is an uncharacterized protein from Bacillus subtilis (strain 168).